A 181-amino-acid polypeptide reads, in one-letter code: Shikimate kinase (181 aa).

G17–T22 lines the ATP pocket. T21 lines the Mg(2+) pocket. Positions 39, 63, and 85 each coordinate substrate. Position 122 (R122) interacts with ATP. R141 serves as a coordination point for substrate.

The protein belongs to the shikimate kinase family. Monomer. Mg(2+) is required as a cofactor.

It is found in the cytoplasm. The catalysed reaction is shikimate + ATP = 3-phosphoshikimate + ADP + H(+). Its pathway is metabolic intermediate biosynthesis; chorismate biosynthesis; chorismate from D-erythrose 4-phosphate and phosphoenolpyruvate: step 5/7. Catalyzes the specific phosphorylation of the 3-hydroxyl group of shikimic acid using ATP as a cosubstrate. The protein is Shikimate kinase of Nostoc punctiforme (strain ATCC 29133 / PCC 73102).